Here is a 396-residue protein sequence, read N- to C-terminus: CCA-adding enzyme (396 aa).

2 residues coordinate ATP: glycine 32 and arginine 35. Residues glycine 32 and arginine 35 each coordinate CTP. Positions 45 and 47 each coordinate Mg(2+). ATP is bound by residues arginine 116, aspartate 159, arginine 162, arginine 165, and arginine 168. The CTP site is built by arginine 116, aspartate 159, arginine 162, arginine 165, and arginine 168.

The protein belongs to the tRNA nucleotidyltransferase/poly(A) polymerase family. Bacterial CCA-adding enzyme type 3 subfamily. As to quaternary structure, homodimer. It depends on Mg(2+) as a cofactor.

The enzyme catalyses a tRNA precursor + 2 CTP + ATP = a tRNA with a 3' CCA end + 3 diphosphate. The catalysed reaction is a tRNA with a 3' CCA end + 2 CTP + ATP = a tRNA with a 3' CCACCA end + 3 diphosphate. In terms of biological role, catalyzes the addition and repair of the essential 3'-terminal CCA sequence in tRNAs without using a nucleic acid template. Adds these three nucleotides in the order of C, C, and A to the tRNA nucleotide-73, using CTP and ATP as substrates and producing inorganic pyrophosphate. tRNA 3'-terminal CCA addition is required both for tRNA processing and repair. Also involved in tRNA surveillance by mediating tandem CCA addition to generate a CCACCA at the 3' terminus of unstable tRNAs. While stable tRNAs receive only 3'-terminal CCA, unstable tRNAs are marked with CCACCA and rapidly degraded. The protein is CCA-adding enzyme of Lactobacillus delbrueckii subsp. bulgaricus (strain ATCC BAA-365 / Lb-18).